A 599-amino-acid chain; its full sequence is Serine/threonine-protein kinase haspin homolog (599 aa).

In terms of domain architecture, Protein kinase spans 287 to 599 (PESIVKIGEG…FSDMLMDQIS (313 aa)). ATP-binding positions include 293-301 (IGEGTYGEA), Lys310, 407-412 (EHGGKD), 448-453 (DLHWGN), and 486-488 (DFT). Catalysis depends on Asp448, which acts as the Proton acceptor.

It belongs to the protein kinase superfamily. Ser/Thr protein kinase family. Haspin subfamily. As to expression, expressed in meristems and primordia of root tips, lateral roots, shoot apex, leaves and flowers.

It localises to the cytoplasm. Its subcellular location is the perinuclear region. The protein localises to the nucleus. It is found in the chromosome. The protein resides in the cytoskeleton. It localises to the phragmoplast. It carries out the reaction L-seryl-[protein] + ATP = O-phospho-L-seryl-[protein] + ADP + H(+). The catalysed reaction is L-threonyl-[protein] + ATP = O-phospho-L-threonyl-[protein] + ADP + H(+). In terms of biological role, threonine-protein kinase that phosphorylates histone H3 in vitro at 'Thr-3' (H3T3ph) and 'Thr-11' (H3T11ph), but not at 'Ser-10' (H3S10ph) or 'Ser-28' (H3S28ph). Plays a role in mitotic cell division during plant growth. Threonine-protein kinase that phosphorylates histone H3 in vitro at 'Thr-3' (H3T3ph), but not at 'Thr-11' (H3T11ph), 'Ser-10' (H3S10ph) or 'Ser-28' (H3S28ph). Involved in histone H3 phosphorylation in mitotic cells. Contributes to organ and plant development, as well as embryonic patterning. This Arabidopsis thaliana (Mouse-ear cress) protein is Serine/threonine-protein kinase haspin homolog.